The chain runs to 165 residues: MKESSLKLAKKVTVSEITNKISSAKAIAFAEYRGLTVAQLKEMRVEAKKVGVELKVYKNRLFKLATDKLGYDLSSFLVGANIFAFSNDDDMSAAKLLVKFAKKHKEFVVLKAGTFEGKVVDTQELKKVAALPSYEEALTILARSLMAPLQQLSLGLKLVSEQKSN.

The protein belongs to the universal ribosomal protein uL10 family. Part of the ribosomal stalk of the 50S ribosomal subunit. The N-terminus interacts with L11 and the large rRNA to form the base of the stalk. The C-terminus forms an elongated spine to which L12 dimers bind in a sequential fashion forming a multimeric L10(L12)X complex.

In terms of biological role, forms part of the ribosomal stalk, playing a central role in the interaction of the ribosome with GTP-bound translation factors. This Mycoplasmopsis synoviae (strain 53) (Mycoplasma synoviae) protein is Large ribosomal subunit protein uL10.